The following is a 351-amino-acid chain: Protein RecA (351 aa).

67–74 lines the ATP pocket; the sequence is GPESSGKT.

This sequence belongs to the RecA family.

The protein localises to the cytoplasm. Its function is as follows. Can catalyze the hydrolysis of ATP in the presence of single-stranded DNA, the ATP-dependent uptake of single-stranded DNA by duplex DNA, and the ATP-dependent hybridization of homologous single-stranded DNAs. It interacts with LexA causing its activation and leading to its autocatalytic cleavage. This Mannheimia succiniciproducens (strain KCTC 0769BP / MBEL55E) protein is Protein RecA.